Consider the following 660-residue polypeptide: Acetyl-coenzyme A synthetase (660 aa).

CoA-binding positions include 197–200 (RGGK) and T317. Residues 397 to 399 (GEP), 421 to 426 (DTFWQT), D512, and R528 contribute to the ATP site. S536 serves as a coordination point for CoA. R539 lines the ATP pocket. V550 and V555 together coordinate Mg(2+). K625 is subject to N6-acetyllysine.

It belongs to the ATP-dependent AMP-binding enzyme family. It depends on Mg(2+) as a cofactor. Post-translationally, acetylated. Deacetylation by the SIR2-homolog deacetylase activates the enzyme.

It carries out the reaction acetate + ATP + CoA = acetyl-CoA + AMP + diphosphate. In terms of biological role, catalyzes the conversion of acetate into acetyl-CoA (AcCoA), an essential intermediate at the junction of anabolic and catabolic pathways. AcsA undergoes a two-step reaction. In the first half reaction, AcsA combines acetate with ATP to form acetyl-adenylate (AcAMP) intermediate. In the second half reaction, it can then transfer the acetyl group from AcAMP to the sulfhydryl group of CoA, forming the product AcCoA. The protein is Acetyl-coenzyme A synthetase of Cupriavidus metallidurans (strain ATCC 43123 / DSM 2839 / NBRC 102507 / CH34) (Ralstonia metallidurans).